The primary structure comprises 852 residues: Protein mono-ADP-ribosyltransferase PARP8 (852 aa).

Disordered regions lie at residues 113–134 (NGEESRQNSTVEEDSEGDNDSE) and 289–310 (SPSYPPPGCGKSKSKLKPEQDG). A compositionally biased stretch (acidic residues) spans 123 to 134 (VEEDSEGDNDSE). Cys332, Cys366, Cys375, and Cys394 each carry ADP-ribosylcysteine. The PARP catalytic domain maps to 615–842 (EMTQAPYLEI…QEGGIHKEIL (228 aa)). The disordered stretch occupies residues 748–775 (QKVSSKDEPASSSKSSNASQSQKKGQQS). Residues 757-775 (ASSSKSSNASQSQKKGQQS) show a composition bias toward low complexity.

The protein belongs to the ARTD/PARP family. Post-translationally, auto-mono-ADP-ribosylated.

It catalyses the reaction L-cysteinyl-[protein] + NAD(+) = S-(ADP-D-ribosyl)-L-cysteinyl-[protein] + nicotinamide + H(+). Functionally, mono-ADP-ribosyltransferase that mediates mono-ADP-ribosylation of target proteins. This chain is Protein mono-ADP-ribosyltransferase PARP8, found in Mus musculus (Mouse).